The primary structure comprises 665 residues: UvrABC system protein B (665 aa).

A Helicase ATP-binding domain is found at 25 to 178 (ASLQAEHRFQ…RQLLRDLTTI (154 aa)). Residue 38-45 (GATGTGKT) coordinates ATP. A Beta-hairpin motif is present at residues 91 to 114 (YYDYYQPEAYIPVTDTYIEKTAAI). One can recognise a Helicase C-terminal domain in the interval 429 to 595 (QVDDLLGEVR…PIVKKASNAI (167 aa)). The UVR domain maps to 626–661 (PELITQLEAQMKEAAKKLEFEEAAKYRDRIKQLRDK).

It belongs to the UvrB family. Forms a heterotetramer with UvrA during the search for lesions. Interacts with UvrC in an incision complex.

It localises to the cytoplasm. The UvrABC repair system catalyzes the recognition and processing of DNA lesions. A damage recognition complex composed of 2 UvrA and 2 UvrB subunits scans DNA for abnormalities. Upon binding of the UvrA(2)B(2) complex to a putative damaged site, the DNA wraps around one UvrB monomer. DNA wrap is dependent on ATP binding by UvrB and probably causes local melting of the DNA helix, facilitating insertion of UvrB beta-hairpin between the DNA strands. Then UvrB probes one DNA strand for the presence of a lesion. If a lesion is found the UvrA subunits dissociate and the UvrB-DNA preincision complex is formed. This complex is subsequently bound by UvrC and the second UvrB is released. If no lesion is found, the DNA wraps around the other UvrB subunit that will check the other stand for damage. The chain is UvrABC system protein B from Cyanothece sp. (strain PCC 7425 / ATCC 29141).